We begin with the raw amino-acid sequence, 507 residues long: RNA polymerase I-specific transcription initiation factor RRN11 (507 aa).

Over residues 37 to 47 (KSTTTDSLPTP) the composition is skewed to polar residues. Disordered regions lie at residues 37–76 (KSTT…LQQK) and 89–124 (GEIY…SDEE). Positions 97–108 (SETDSQEEETEE) are enriched in acidic residues. Residues 109–124 (GGEHDTGIDKEDSDEE) show a composition bias toward basic and acidic residues.

In terms of assembly, component of the core factor (CF) complex, which consists of RRN6, RRN7 and RRN11. The CF heterotrimer may further dimerize to form a hexamer. RRN11 interacts with RRN6, RRN7 and SPT15.

It localises to the nucleus. It is found in the nucleolus. Acts as a component of the core factor (CF) complex which is essential for the initiation of rDNA transcription by RNA polymerase I. After binding of UAF (upstream activation factor) to an upstream element of the promoter, CF is recruited in a SPT15/TBP-dependent manner to form a preinitiation complex. The polypeptide is RNA polymerase I-specific transcription initiation factor RRN11 (RRN11) (Saccharomyces cerevisiae (strain ATCC 204508 / S288c) (Baker's yeast)).